Consider the following 389-residue polypeptide: Packaging protein 3 (389 aa).

The interaction with packaging protein 1 stretch occupies residues 1–131 (MHPVLRQMKP…VKAEVNFQTT (131 aa)). A disordered region spans residues 350-389 (EKENPDGSVSFQQHERGTQSHENGGHAEPAYSRRQLGRFY). Positions 362-374 (QHERGTQSHENGG) are enriched in basic and acidic residues.

The protein belongs to the adenoviridae packaging protein 3 family. Part of the genome packaging complex composed of packaging proteins 1, 2 and 3; this complex specifically binds to the packaging sequence on the left end of viral genomic DNA and performs packaging of the viral genome. Interacts with hexon-linking protein IIIa; this interaction is required to promote correct genome packaging. In terms of processing, cleaved at different sites by the viral protease during virion maturation.

The protein localises to the host nucleus. Involved in viral genome packaging through its interaction with packaging proteins 1 and 2. After proteolytic cleavage by adenovirus protease, L1 52/55k protein is removed from the capsid during viral maturation. In Canine adenovirus serotype 1 (strain CLL) (CAdV-1), this protein is Packaging protein 3.